The primary structure comprises 173 residues: Superoxide dismutase [Cu-Zn] (173 aa).

The first 22 residues, 1–22, serve as a signal peptide directing secretion; it reads MNKAKTLLFTALAFGLSHQALA. Residues histidine 67, histidine 69, and histidine 92 each contribute to the Cu cation site. Cysteine 74 and cysteine 169 are joined by a disulfide. Zn(2+) contacts are provided by histidine 92, histidine 101, histidine 110, and aspartate 113. Histidine 147 serves as a coordination point for Cu cation.

This sequence belongs to the Cu-Zn superoxide dismutase family. As to quaternary structure, homodimer. Cu cation is required as a cofactor. The cofactor is Zn(2+).

The protein localises to the periplasm. The catalysed reaction is 2 superoxide + 2 H(+) = H2O2 + O2. Its function is as follows. Destroys radicals which are normally produced within the cells and which are toxic to biological systems. This Photobacterium leiognathi protein is Superoxide dismutase [Cu-Zn] (sodC).